The following is a 608-amino-acid chain: Protein Spindly (608 aa).

Met-1 is subject to N-acetylmethionine. A coiled-coil region spans residues 1–445 (MEADITNLRN…LKLKYEPEER (445 aa)). The tract at residues 465–487 (PEETEETAAASATEDGVSRLPPH) is disordered. Phosphoserine occurs at positions 516, 518, and 558.

The protein belongs to the Spindly family. In terms of assembly, interacts with KNTC1 and ZW10. These interactions appear weak and may be transient or indirect. Interacts with dynein intermediate chain and dynactin (DCTN1). Interacts with the catalytically active form of USP45. Post-translationally, monoubiquitinated with'Lys-48' linkage. Deubiquitinated by USP45.

Its subcellular location is the cytoplasm. It localises to the cytoskeleton. It is found in the microtubule organizing center. The protein resides in the centrosome. The protein localises to the chromosome. Its subcellular location is the centromere. It localises to the kinetochore. It is found in the nucleus. The protein resides in the spindle pole. In terms of biological role, required for the localization of dynein and dynactin to the mitotic kintochore. Dynein is believed to control the initial lateral interaction between the kinetochore and spindle microtubules and to facilitate the subsequent formation of end-on kinetochore-microtubule attachments mediated by the NDC80 complex. Also required for correct spindle orientation. Does not appear to be required for the removal of spindle assembly checkpoint (SAC) proteins from the kinetochore upon bipolar spindle attachment. Acts as an adapter protein linking the dynein motor complex to various cargos and converts dynein from a non-processive to a highly processive motor in the presence of dynactin. Facilitates the interaction between dynein and dynactin and activates dynein processivity (the ability to move along a microtubule for a long distance without falling off the track). Plays a role in cell migration. The sequence is that of Protein Spindly (Spdl1) from Mus musculus (Mouse).